The sequence spans 485 residues: MSLFDHKITELKQMIHKKEIKISDLVDESYKRIASVDDKVQAFLQLDEERARAYAKELDEAVDGRSEHGLLFGMPIGVKDNIVTKGLRTTCSSKILENFDPIYDATVVERLQAAEAVTIGKLNMDEFAMGSSTENSAYKATKNPWNLDTVPGGSSGGSAAAVAAGEVPFSLGSDTGGSIRQPASFCGVVGLKPTYGRVSRYGLVAFASSLDQIGPITRTVEDNAFLLQAISGPDKMDSTSANVEVPDFLSSLTGDIKGLKIAVPKEYLGEGVGKEAKESVLAALKVLEDLGATWEEVSLPHSKYALATYYLLSSSEASANLARFDGIRYGYRSDNADNLIDLYKQTRSEGFGNEVKRRIMLGTFALSSGYYDAYYKKAQKVRTLIKKDFEDVFEKYDVIVGPTTPTPAFKIGEKTSDPLTMYANDILTIPVNLAGVPGISVPCGFADGLPLGLQIIGKHFDEGTVYRVAHAFEQATDHHKAKPEL.

Catalysis depends on charge relay system residues Lys-79 and Ser-154. Ser-178 serves as the catalytic Acyl-ester intermediate.

Belongs to the amidase family. GatA subfamily. In terms of assembly, heterotrimer of A, B and C subunits.

It carries out the reaction L-glutamyl-tRNA(Gln) + L-glutamine + ATP + H2O = L-glutaminyl-tRNA(Gln) + L-glutamate + ADP + phosphate + H(+). Allows the formation of correctly charged Gln-tRNA(Gln) through the transamidation of misacylated Glu-tRNA(Gln) in organisms which lack glutaminyl-tRNA synthetase. The reaction takes place in the presence of glutamine and ATP through an activated gamma-phospho-Glu-tRNA(Gln). This is Glutamyl-tRNA(Gln) amidotransferase subunit A from Bacillus velezensis (strain DSM 23117 / BGSC 10A6 / LMG 26770 / FZB42) (Bacillus amyloliquefaciens subsp. plantarum).